Here is a 255-residue protein sequence, read N- to C-terminus: Phosphatidylglycerol--prolipoprotein diacylglyceryl transferase (255 aa).

Helical transmembrane passes span 15–35 (WYGI…NLNC), 46–66 (IDVF…YYVV), and 84–104 (LGGL…YIVS). Residue arginine 130 coordinates a 1,2-diacyl-sn-glycero-3-phospho-(1'-sn-glycerol). 3 helical membrane-spanning segments follow: residues 169–189 (PTFL…VYIF), 196–216 (GTVI…IEGL), and 228–248 (VAQL…VYLK).

The protein belongs to the Lgt family.

The protein localises to the cell membrane. The enzyme catalyses L-cysteinyl-[prolipoprotein] + a 1,2-diacyl-sn-glycero-3-phospho-(1'-sn-glycerol) = an S-1,2-diacyl-sn-glyceryl-L-cysteinyl-[prolipoprotein] + sn-glycerol 1-phosphate + H(+). The protein operates within protein modification; lipoprotein biosynthesis (diacylglyceryl transfer). Functionally, catalyzes the transfer of the diacylglyceryl group from phosphatidylglycerol to the sulfhydryl group of the N-terminal cysteine of a prolipoprotein, the first step in the formation of mature lipoproteins. In Clostridium kluyveri (strain NBRC 12016), this protein is Phosphatidylglycerol--prolipoprotein diacylglyceryl transferase.